The chain runs to 244 residues: Nodulation protein G (244 aa).

11–35 (VTGASGAIGGAIARVLHAQGAIVGL) is a binding site for NAD(+). Residue S139 coordinates substrate. Y152 functions as the Proton acceptor in the catalytic mechanism.

It belongs to the short-chain dehydrogenases/reductases (SDR) family.

Proposed to modify Nod factor fatty acyl chain. This chain is Nodulation protein G (nodG), found in Rhizobium meliloti (Ensifer meliloti).